The chain runs to 215 residues: Nascent polypeptide-associated complex subunit alpha (215 aa).

Residues 1–81 (MPGEATDTVP…SEKKARKAMS (81 aa)) form a disordered region. A compositionally biased stretch (polar residues) spans 9–28 (VPATEQELPQPQAETGSGTE). Over residues 29-42 (SDSDESVPELEEQD) the composition is skewed to acidic residues. Position 43 is a phosphoserine; by ILK1 (Ser-43). The segment covering 44-57 (TQATTQQAQLAAAA) has biased composition (low complexity). Positions 69-80 (QSRSEKKARKAM) are required for DNA-binding. Residues 70 to 135 (SRSEKKARKA…AKIEDLSQQA (66 aa)) enclose the NAC-A/B domain. The segment at 93-108 (RVTIRKSKNILFVITK) is RNA/DNA-binding. Phosphoserine is present on Ser-132. Lys-142 bears the N6-acetyllysine; alternate mark. Lys-142 is covalently cross-linked (Glycyl lysine isopeptide (Lys-Gly) (interchain with G-Cter in SUMO2); alternate). Thr-159 carries the post-translational modification Phosphothreonine; by GSK3-beta. A Phosphothreonine modification is found at Thr-161. Residues Ser-166, Ser-186, Ser-191, and Ser-203 each carry the phosphoserine modification. Positions 176-213 (VEVKDIELVMSQANVSRAKAVRALKNNSNDIVNAIMEL) constitute a UBA domain.

The protein belongs to the NAC-alpha family. Part of the nascent polypeptide-associated complex (NAC), which is a heterodimer of NACA and BTF3 (via NAC-A/B domains). NAC associates with ribosomes through the BTF3/NACB subunit and contacts the ribosomal protein L23, which is positioned near the exiting site. Both subunits can contact nascent polypeptide chains. NACA may also form homodimers, and only this form binds DNA. Interacts with TBP and JUN. Phosphorylation of Ser-43 by ILK during cell adhesion may promote nuclear localization. Phosphorylation of Thr-159 by GSK3B may promote proteasome mediated degradation.

Its subcellular location is the cytoplasm. The protein resides in the nucleus. Prevents inappropriate targeting of non-secretory polypeptides to the endoplasmic reticulum (ER). Binds to nascent polypeptide chains as they emerge from the ribosome and blocks their interaction with the signal recognition particle (SRP), which normally targets nascent secretory peptides to the ER. Also reduces the inherent affinity of ribosomes for protein translocation sites in the ER membrane (M sites). May act as a specific coactivator for JUN, binding to DNA and stabilizing the interaction of JUN homodimers with target gene promoters. This chain is Nascent polypeptide-associated complex subunit alpha (NACA), found in Bos taurus (Bovine).